We begin with the raw amino-acid sequence, 342 residues long: uncharacterized protein (342 aa).

It belongs to the cycloisomerase 2 family.

This is an uncharacterized protein from Staphylococcus aureus (strain N315).